Reading from the N-terminus, the 601-residue chain is ATP-dependent lipid A-core flippase (601 aa).

The 301-residue stretch at 28–328 folds into the ABC transmembrane type-1 domain; it reads LLSVVGLIVY…LTRVNAEFQR (301 aa). 6 helical membrane-spanning segments follow: residues 32 to 52, 81 to 101, 160 to 180, 183 to 203, 267 to 287, and 296 to 316; these read VGLI…GPFI, VLLM…FANF, ALIS…LMFY, WKLS…ITIV, AVSQ…VLYA, and DLTA…LQPI. In terms of domain architecture, ABC transporter spans 360-597; it reads LRFDNVSFSY…GGMYAKLYQM (238 aa). 394–401 serves as a coordination point for ATP; sequence GRSGSGKS.

The protein belongs to the ABC transporter superfamily. Lipid exporter (TC 3.A.1.106) family. As to quaternary structure, homodimer.

The protein localises to the cell inner membrane. The enzyme catalyses ATP + H2O + lipid A-core oligosaccharideSide 1 = ADP + phosphate + lipid A-core oligosaccharideSide 2.. Involved in lipopolysaccharide (LPS) biosynthesis. Translocates lipid A-core from the inner to the outer leaflet of the inner membrane. Transmembrane domains (TMD) form a pore in the inner membrane and the ATP-binding domain (NBD) is responsible for energy generation. The protein is ATP-dependent lipid A-core flippase of Shewanella oneidensis (strain ATCC 700550 / JCM 31522 / CIP 106686 / LMG 19005 / NCIMB 14063 / MR-1).